The chain runs to 294 residues: Potassium-transporting ATPase subunit beta (294 aa).

The Cytoplasmic portion of the chain corresponds to 1–36 (MAALQEKKSCSQRMAEFRHYCWNPDTGQMLGRTPAR). The helical; Signal-anchor for type II membrane protein transmembrane segment at 37–57 (WVWISLYYAGFYVVMTGLFAL) threads the bilayer. The Extracellular portion of the chain corresponds to 58–294 (CIYVLMQTID…KVEFKLTIQK (237 aa)). Residues Asn-99, Asn-103, Asn-130, Asn-146, and Asn-161 are each glycosylated (N-linked (GlcNAc...) asparagine). Cys-131 and Cys-152 are joined by a disulfide. A disulfide bond links Cys-162 and Cys-178. Residues Asn-193 and Asn-225 are each glycosylated (N-linked (GlcNAc...) asparagine). The tract at residues 194 to 294 (NTAPRVDCTF…KVEFKLTIQK (101 aa)) is immunoglobulin-like. A disulfide bridge connects residues Cys-201 and Cys-266.

This sequence belongs to the X(+)/potassium ATPases subunit beta family. In terms of assembly, the ATPase pump is composed of two subunits: alpha (catalytic) and beta (regulatory). Interacts with alpha subunit ATP12A; this interaction is required for the formation of a functionally active pump and targeting at the plasma membrane. Interacts (via N-terminus) with alpha subunit ATP4A (via the P-domain). In terms of processing, N-glycosylation is necessary for assembly and functional expression of the pump at the plasma membrane. In terms of tissue distribution, expressed in parietal cells (at protein level).

It localises to the apical cell membrane. It is found in the cell membrane. Functionally, the beta subunit of the gastric H(+)/K(+) ATPase pump which transports H(+) ions in exchange for K(+) ions across the apical membrane of parietal cells. Plays a structural and regulatory role in the assembly and membrane targeting of a functionally active pump. Within a transport cycle, the transfer of a H(+) ion across the membrane is coupled to ATP hydrolysis and is associated with a transient phosphorylation of the alpha subunit that shifts the pump conformation from inward-facing (E1) to outward-facing state (E2). Interacts with the phosphorylation domain of the alpha subunit and functions as a ratchet, stabilizing the lumenal-open E2 conformation and preventing the reverse reaction of the transport cycle. This Mus musculus (Mouse) protein is Potassium-transporting ATPase subunit beta (Atp4b).